The chain runs to 39 residues: MTLDRTFPIFTVRWLAVHGLAVPTVFFLGSISAMQFIQR.

A helical membrane pass occupies residues 14–30 (WLAVHGLAVPTVFFLGS). H18 contributes to the heme binding site.

Belongs to the PsbE/PsbF family. Heterodimer of an alpha subunit and a beta subunit. PSII is composed of 1 copy each of membrane proteins PsbA, PsbB, PsbC, PsbD, PsbE, PsbF, PsbH, PsbI, PsbJ, PsbK, PsbL, PsbM, PsbT, PsbX, PsbY, PsbZ, Psb30/Ycf12, at least 3 peripheral proteins of the oxygen-evolving complex and a large number of cofactors. It forms dimeric complexes. Requires heme b as cofactor.

The protein resides in the plastid. Its subcellular location is the chloroplast thylakoid membrane. This b-type cytochrome is tightly associated with the reaction center of photosystem II (PSII). PSII is a light-driven water:plastoquinone oxidoreductase that uses light energy to abstract electrons from H(2)O, generating O(2) and a proton gradient subsequently used for ATP formation. It consists of a core antenna complex that captures photons, and an electron transfer chain that converts photonic excitation into a charge separation. The chain is Cytochrome b559 subunit beta from Pinus koraiensis (Korean pine).